We begin with the raw amino-acid sequence, 265 residues long: Palmitoyltransferase ZDHHC21 (265 aa).

Residues 1 to 16 are Cytoplasmic-facing; sequence MGLRIHFVVDPHGWCC. The helical transmembrane segment at 17 to 37 threads the bilayer; it reads MGLIVFVWLYNFFLIPKIVLF. At 38 to 44 the chain is on the extracellular side; the sequence is PHYEEGH. A helical transmembrane segment spans residues 45–65; the sequence is IPGILIIIFYGIAMFCLVALV. Over 66–133 the chain is Cytoplasmic; sequence RASITDPGRL…NNCVGEDNHW (68 aa). The DHHC domain occupies 90 to 140; it reads ELCNKCNLMRPKRSHHCSRCGHCVRRMDHHCPWINNCVGEDNHWLFLQLCF. The active-site S-palmitoyl cysteine intermediate is Cys120. The helical transmembrane segment at 134–154 threads the bilayer; the sequence is LFLQLCFYTELLTCYALMFSF. Residues 155–185 lie on the Extracellular side of the membrane; sequence CHYYYFLPLKKRNLDLFVVRHELAIMRLAAF. The chain crosses the membrane as a helical span at residues 186-206; it reads MGITMLVGITGLFYTQLIGII. Over 207–265 the chain is Cytoplasmic; that stretch reads TDTTSIEKMSNCCEEISRPRKPWQQTFSEVFGTRWKILWFIPFRRRQPLRVPYHFANHV.

This sequence belongs to the DHHC palmitoyltransferase family.

The protein localises to the golgi apparatus membrane. The protein resides in the golgi apparatus. It localises to the cis-Golgi network membrane. Its subcellular location is the cell membrane. The enzyme catalyses L-cysteinyl-[protein] + hexadecanoyl-CoA = S-hexadecanoyl-L-cysteinyl-[protein] + CoA. Palmitoyltransferase that catalyzes the addition of palmitate onto various protein substrates. Palmitoylates sex steroid hormone receptors, including ESR1, PGR and AR, thereby regulating their targeting to the plasma membrane. This affects rapid intracellular signaling by sex hormones via ERK and AKT kinases and the generation of cAMP, but does not affect that mediated by their nuclear receptor. Palmitoylates FYN, regulates its localization in hair follicles and plays a key role in epidermal homeostasis and hair follicle differentiation. Through the palmitoylation of PLCB1 and the regulation of PLCB1 downstream signaling may indirectly regulate the function of the endothelial barrier and the adhesion of leukocytes to the endothelium. Also has a palmitoyltransferase activity toward ADRA1D, positively regulating its activity and expression and may thereby play a role in vascular contraction. May also palmitoylate eNOS and LCK. The polypeptide is Palmitoyltransferase ZDHHC21 (Bos taurus (Bovine)).